A 208-amino-acid chain; its full sequence is Small ribosomal subunit protein uS5 (208 aa).

Positions 48 to 111 (LEDEVLDINM…DAAKLDITYI (64 aa)) constitute an S5 DRBM domain.

This sequence belongs to the universal ribosomal protein uS5 family. Part of the 30S ribosomal subunit. Contacts protein S4.

In terms of biological role, with S4 and S12 plays an important role in translational accuracy. The chain is Small ribosomal subunit protein uS5 from Methanosarcina barkeri (strain Fusaro / DSM 804).